Reading from the N-terminus, the 464-residue chain is Soluble pyridine nucleotide transhydrogenase (464 aa).

Asp35–Cys44 provides a ligand contact to FAD.

The protein belongs to the class-I pyridine nucleotide-disulfide oxidoreductase family. Requires FAD as cofactor.

The protein localises to the cytoplasm. It carries out the reaction NAD(+) + NADPH = NADH + NADP(+). Its function is as follows. Conversion of NADPH, generated by peripheral catabolic pathways, to NADH, which can enter the respiratory chain for energy generation. The sequence is that of Soluble pyridine nucleotide transhydrogenase from Pseudomonas putida (strain GB-1).